The chain runs to 256 residues: uncharacterized protein (256 aa).

The signal sequence occupies residues 1 to 22; the sequence is MGYLKRIGMCISLLIVIIFVTS. Residue cysteine 23 is the site of N-palmitoyl cysteine attachment. Cysteine 23 carries S-diacylglycerol cysteine lipidation.

This sequence belongs to the staphylococcal tandem lipoprotein family.

The protein resides in the cell membrane. This is an uncharacterized protein from Staphylococcus aureus (strain MRSA252).